Consider the following 462-residue polypeptide: Anthranilate synthase component 1 (462 aa).

Residues serine 46 and 243–245 contribute to the L-tryptophan site; that span reads PHM. 278-279 lines the chorismate pocket; it reads GT. Residue glutamate 305 coordinates Mg(2+). Chorismate-binding positions include tyrosine 394, arginine 414, 428–430, and glycine 430; that span reads SGG. Residue glutamate 444 coordinates Mg(2+).

The protein belongs to the anthranilate synthase component I family. In terms of assembly, heterotetramer consisting of two non-identical subunits: a beta subunit (TrpG) and a large alpha subunit (TrpE). The cofactor is Mg(2+).

It catalyses the reaction chorismate + L-glutamine = anthranilate + pyruvate + L-glutamate + H(+). The protein operates within amino-acid biosynthesis; L-tryptophan biosynthesis; L-tryptophan from chorismate: step 1/5. Feedback inhibited by tryptophan. Part of a heterotetrameric complex that catalyzes the two-step biosynthesis of anthranilate, an intermediate in the biosynthesis of L-tryptophan. In the first step, the glutamine-binding beta subunit (TrpG) of anthranilate synthase (AS) provides the glutamine amidotransferase activity which generates ammonia as a substrate that, along with chorismate, is used in the second step, catalyzed by the large alpha subunit of AS (TrpE) to produce anthranilate. In the absence of TrpG, TrpE can synthesize anthranilate directly from chorismate and high concentrations of ammonia. The polypeptide is Anthranilate synthase component 1 (trpE) (Leptospira biflexa).